A 203-amino-acid chain; its full sequence is Ras-related protein Rab-30 (203 aa).

Residues Val-20, Gly-21, Lys-22, Thr-23, Cys-24, and Thr-41 each contribute to the GTP site. Thr-23 is a binding site for Mg(2+). The segment at 36 to 44 (PGQGATIGV) is switch-I. The Mg(2+) site is built by Thr-41 and Asp-64. GTP contacts are provided by Gly-67, Asn-122, Lys-123, Asp-125, Ala-153, and Lys-154. Positions 67-83 (GQERFRSITQSYYRSAN) are switch-II. Residues Cys-199 and Cys-200 are each lipidated (S-geranylgeranyl cysteine). Cys-200 carries the cysteine methyl ester modification. A propeptide spans 201–203 (NFN) (removed in mature form).

It belongs to the small GTPase superfamily. Rab family. The cofactor is Mg(2+).

The protein localises to the membrane. The protein resides in the golgi apparatus. It localises to the trans-Golgi network membrane. It is found in the cis-Golgi network membrane. Its subcellular location is the golgi apparatus membrane. The protein localises to the cytoplasm. The protein resides in the cytoplasmic vesicle. It localises to the autophagosome membrane. It is found in the autolysosome membrane. The catalysed reaction is GTP + H2O = GDP + phosphate + H(+). Regulated by guanine nucleotide exchange factors (GEFs) which promote the exchange of bound GDP for free GTP. Regulated by GTPase activating proteins (GAPs) which increase the GTP hydrolysis activity. Inhibited by GDP dissociation inhibitors (GDIs). The small GTPases Rab are key regulators of intracellular membrane trafficking, from the formation of transport vesicles to their fusion with membranes. Rabs cycle between an inactive GDP-bound form and an active GTP-bound form that is able to recruit to membranes different sets of downstream effectors directly responsible for vesicle formation, movement, tethering and fusion. RAB30 is required for maintaining the structural integrity of the Golgi apparatus, possibly by mediating interactions with cytoplasmic scaffolding proteins. Facilitates lipid homeostasis during fasting by regulating hepatic protein and lipid trafficking in a PPAR-alpha-dependent manner. Promotes autophagosome biogenesis during bacterial infection such as group A Streptococcus infection. This Bos taurus (Bovine) protein is Ras-related protein Rab-30 (RAB30).